The sequence spans 124 residues: Small ribosomal subunit protein uS12 (124 aa).

The segment at 1–25 (MATINQLVRKPRQATTYKSASPALD) is disordered. Asp89 is subject to 3-methylthioaspartic acid.

Belongs to the universal ribosomal protein uS12 family. In terms of assembly, part of the 30S ribosomal subunit. Contacts proteins S8 and S17. May interact with IF1 in the 30S initiation complex.

With S4 and S5 plays an important role in translational accuracy. In terms of biological role, interacts with and stabilizes bases of the 16S rRNA that are involved in tRNA selection in the A site and with the mRNA backbone. Located at the interface of the 30S and 50S subunits, it traverses the body of the 30S subunit contacting proteins on the other side and probably holding the rRNA structure together. The combined cluster of proteins S8, S12 and S17 appears to hold together the shoulder and platform of the 30S subunit. The polypeptide is Small ribosomal subunit protein uS12 (Stenotrophomonas maltophilia (strain R551-3)).